We begin with the raw amino-acid sequence, 500 residues long: tRNA nucleotidyltransferase cca1 (500 aa).

The flexible loop stretch occupies residues 122-139 (DYTNSNSSNKLVFGTPLE). An ERhxxExxxhh motif motif is present at residues 231-241 (ERIGVEVDKML).

The protein belongs to the tRNA nucleotidyltransferase/poly(A) polymerase family.

It carries out the reaction a tRNA precursor + 2 CTP = a tRNA with a 3' CC end + 2 diphosphate. Its function is as follows. tRNA nucleotidyltransferase involved in the synthesis of the tRNA CCA terminus. In contrast to what is usually observed in eukaryotes for which one enzyme synthesizes the whole tRNA CCA terminus, in S.pombe, cca1 specifically adds two cytidine residues to a tRNA substrate lacking this sequence while cca2 specifically adds the terminal adenosine residue thereby completing the CCA sequence. In Schizosaccharomyces pombe (strain 972 / ATCC 24843) (Fission yeast), this protein is tRNA nucleotidyltransferase cca1.